The chain runs to 269 residues: Type II iodothyronine deiodinase (269 aa).

Residues 1-9 are Lumenal-facing; sequence MGILSVDLL. Residues 10–34 form a helical; Signal-anchor for type III membrane protein membrane-spanning segment; that stretch reads ITLQILPVFFSNCLFLALYDSVILL. Over 35 to 269 the chain is Cytoplasmic; the sequence is KHVVLLLSRS…KNFSKRUKLD (235 aa). The interval 83–103 is disordered; sequence NSSVVHVSSPEGGDTSGNGAQ. U133 is an active-site residue. 2 non-standard amino acids (selenocysteine) are found at residues U133 and U266.

Belongs to the iodothyronine deiodinase family. As to quaternary structure, predominantly monomer. Can form homodimers but homodimerization is not essential for enzyme activity. Interacts with USP20 and USP33. Interacts with MARCHF6. In terms of processing, ubiquitinated by MARCHF6, leading to its degradation by the proteasome. Deubiquitinated by USP20 and USP33. As to expression, highly expressed in thyroid, mammary and pituitary glands, then in hypothalamus. Low levels detected in diaphragm, heart, kidney and lung.

The protein localises to the endoplasmic reticulum membrane. The catalysed reaction is 3,3',5-triiodo-L-thyronine + iodide + A + H(+) = L-thyroxine + AH2. It carries out the reaction 3,3'-diiodo-L-thyronine + iodide + A + H(+) = 3,3',5'-triiodo-L-thyronine + AH2. The enzyme catalyses 3'-iodo-L-thyronine + iodide + A + H(+) = 3',5'-diiodo-L-thyronine + AH2. It catalyses the reaction 3,3'-diiodothyronamine + iodide + A + H(+) = 3,3',5'-triiodothyronamine + AH2. The catalysed reaction is 3'-iodothyronamine + iodide + A + H(+) = 3',5'-diiodothyronamine + AH2. Its function is as follows. Plays a crucial role in the metabolism of thyroid hormones (TH) and has specific roles in TH activation and inactivation by deiodination. Catalyzes the deiodination of L-thyroxine (T4) to 3,5,3'-triiodothyronine (T3), 3,3',5'-triiodothyronine (rT3) to 3,3'-diiodothyronine (3,3'-T2) and 3',5'-diiodothyronine (3',5'-T2) to 3'-monoiodothyronine (3'-T1) via outer-ring deiodination (ORD). Catalyzes the phenolic ring deiodinations of 3,3',5'-triiodothyronamine and 3',5'- diiodothyronamine. The polypeptide is Type II iodothyronine deiodinase (DIO2) (Bos taurus (Bovine)).